Here is a 73-residue protein sequence, read N- to C-terminus: Dermaseptin-H4 (73 aa).

Residues 1–22 form the signal peptide; the sequence is MAFMKKSLFLVLFLGMVSLSIC. Positions 23-43 are excised as a propeptide; the sequence is EEEKRENEDEAKQEDDEQSEM. The tract at residues 25-45 is disordered; it reads EKRENEDEAKQEDDEQSEMKR. A compositionally biased stretch (acidic residues) spans 30–40; the sequence is EDEAKQEDDEQ. Position 70 is a leucine amide (Leu70). The propeptide occupies 72–73; that stretch reads EQ.

In terms of tissue distribution, expressed by the skin glands.

It is found in the secreted. Has antibacterial activity against the Gram-negative bacteria E.coli ATCC 11775 (MIC=0.8 uM), and the Gram-positive bacteria S.aureus ATCC 12600 (MIC=0.4 uM) and M.luteus ATCC 49732 (MIC=0.8 uM). Does not inhibit the growth of the fungus C.albicans. Probably acts by disturbing membrane functions with its amphipathic structure. The chain is Dermaseptin-H4 from Pithecopus azureus (Orange-legged monkey tree frog).